We begin with the raw amino-acid sequence, 226 residues long: Beta-casein (226 aa).

A disordered region spans residues 1–51 (REKEELNVSSETVESLSSNEPDSSSEESITHINKEKSQKFKHEGQQQREVE). Ser-9 is modified (phosphoserine). The residue at position 12 (Thr-12) is a Phosphothreonine. A phosphoserine mark is found at Ser-15, Ser-17, Ser-18, and Ser-25. Positions 28-51 (SITHINKEKSQKFKHEGQQQREVE) are enriched in basic and acidic residues.

The protein belongs to the beta-casein family. In terms of processing, there are at least three different forms found in milk, with varying degrees of phosphorylation. These include form 5-P which is phosphorylated at three sites, this form is present in low amounts, form 6-P which is phosphorylated at six sites, and form 7-P which is phosphorylated at seven sites. As to expression, mammary gland specific. Secreted in milk.

Its subcellular location is the secreted. In terms of biological role, important role in determination of the surface properties of the casein micelles. The polypeptide is Beta-casein (Equus asinus (Donkey)).